The following is a 160-amino-acid chain: Large ribosomal subunit protein bL17 (160 aa).

The interval 128–160 (KKATKTRRSRKRKSADVVVEAAPAEETPKAAEE) is disordered. The span at 129-140 (KATKTRRSRKRK) shows a compositional bias: basic residues.

This sequence belongs to the bacterial ribosomal protein bL17 family. As to quaternary structure, part of the 50S ribosomal subunit. Contacts protein L32.

This is Large ribosomal subunit protein bL17 from Porphyromonas gingivalis (strain ATCC 33277 / DSM 20709 / CIP 103683 / JCM 12257 / NCTC 11834 / 2561).